Here is a 377-residue protein sequence, read N- to C-terminus: uncharacterized protein (377 aa).

Disordered regions lie at residues 10–79 (YSDG…NVNN), 91–141 (KKNN…DKEE), 182–257 (EAKK…TTTT), 265–284 (ENENQEKENNDNDNDNEPIE), and 289–326 (LEFNKFEEKPIKEVKVNTASSNKRNKKRNNPKKVKEEP). 3 stretches are compositionally biased toward low complexity: residues 14 to 24 (IPQPTITPPTQ), 46 to 79 (NKNNRNNKNNVDNNNNNNNNNNNNEKQNQTNVNN), and 93 to 124 (NNNNNNNNNNNNNNNNNNNNNNKNKYNKFNDN). Basic and acidic residues-rich tracts occupy residues 182–196 (EAKKKEEEDARKRGE) and 209–218 (QTPDKKKKLE). Residues 221 to 257 (TSKNNNKSSTTKTELTNTTTNTSSTTNPTTDTTTTTT) show a composition bias toward low complexity. Basic and acidic residues-rich tracts occupy residues 265-274 (ENENQEKENN) and 292-303 (NKFEEKPIKEVK). Residues 311–320 (KRNKKRNNPK) are compositionally biased toward basic residues.

This is an uncharacterized protein from Dictyostelium discoideum (Social amoeba).